We begin with the raw amino-acid sequence, 252 residues long: 5-oxoprolinase subunit A 1 (252 aa).

Belongs to the LamB/PxpA family. In terms of assembly, forms a complex composed of PxpA, PxpB and PxpC.

It carries out the reaction 5-oxo-L-proline + ATP + 2 H2O = L-glutamate + ADP + phosphate + H(+). Functionally, catalyzes the cleavage of 5-oxoproline to form L-glutamate coupled to the hydrolysis of ATP to ADP and inorganic phosphate. This is 5-oxoprolinase subunit A 1 from Pseudomonas aeruginosa (strain ATCC 15692 / DSM 22644 / CIP 104116 / JCM 14847 / LMG 12228 / 1C / PRS 101 / PAO1).